A 334-amino-acid chain; its full sequence is Fructose-1,6-bisphosphatase class 1 (334 aa).

Glutamate 91, aspartate 113, leucine 115, and aspartate 116 together coordinate Mg(2+). Substrate is bound by residues 116-119, asparagine 208, and lysine 274; that span reads DGSS. Glutamate 280 contacts Mg(2+).

The protein belongs to the FBPase class 1 family. Homotetramer. Mg(2+) is required as a cofactor.

The protein resides in the cytoplasm. It carries out the reaction beta-D-fructose 1,6-bisphosphate + H2O = beta-D-fructose 6-phosphate + phosphate. It functions in the pathway carbohydrate biosynthesis; gluconeogenesis. This chain is Fructose-1,6-bisphosphatase class 1, found in Janthinobacterium sp. (strain Marseille) (Minibacterium massiliensis).